We begin with the raw amino-acid sequence, 371 residues long: MVATIDSIEMPALPTAVEAHPMKGGDDSHSYSQNSCYQKGVIDAAKAVIVEAVNEKLDLENNPIFDPIKPFRIADFGCSTGPNTFHAMQNIVESVETKYKSLQKTPEFHVFFNDHVNNDFNVLFRSLPPNREFFAAGVPGSFYTRVFPKNSIHFAHCSYALHWLSKVPKEIQDKNSLAYNKGRIHYTGTEKHVVKAYFGQFQRDFEGFLKARAQEIVVGGLMVIQIPGLPSGEVLFSRTGAGLLHFLLGTSLMELVNKGIINEESVDSFNLPQYHPSVEDLEMVIEMNDCFTIERVGTLPHPMKNLPFDVQRTSLQVRAIMECILTEHFGENILDPLFEIYTKNLQENFHVFDKEIRKDADLYLVLKRKGN.

Residue Tyr31 coordinates S-adenosyl-L-homocysteine. Residues Tyr37 and Gln38 each contribute to the loganate site. S-adenosyl-L-homocysteine is bound by residues Cys78, Asn83, Asp114, His115, Ser141, and Phe142. Loganate contacts are provided by His162 and Trp163. Asn180 lines the Mg(2+) pocket. Residues Ala241 and His245 each contribute to the loganate site. Residues Asp267, Phe269, and Asn270 each coordinate Mg(2+). Loganate is bound by residues Gln273 and Gln316.

Belongs to the methyltransferase superfamily. Type-7 methyltransferase family. Homodimer. The cofactor is Mg(2+). As to expression, expressed in leaves (especially in leaf epidermis), flowers, siliques and stems, and, at low levels, in hairy roots.

The catalysed reaction is loganate + S-adenosyl-L-methionine = loganin + S-adenosyl-L-homocysteine. It participates in alkaloid biosynthesis. Its activity is regulated as follows. Strongly repressed by loganin and slightly by S-adenosyl-L-homocysteine. In terms of biological role, component of the seco-iridoid and derivatives monoterpenoid indole alkaloids (MIAs, e.g. vinblastine and ajmalicine) biosynthesis pathway. Catalyzes the methylation of loganic acid (6S,7R) to produce loganin. Weak activity with secologanic acid as substrate. Inactive on deoxyloganic, dehydrologanic, epiloganic and loganetic acid. This Catharanthus roseus (Madagascar periwinkle) protein is Loganic acid O-methyltransferase.